The sequence spans 805 residues: Leucine--tRNA ligase (805 aa).

The short motif at 40-51 is the 'HIGH' region element; the sequence is PYPSGAGLHVGH. Residues 576 to 580 carry the 'KMSKS' region motif; the sequence is KMSKS. Residue Lys579 coordinates ATP.

The protein belongs to the class-I aminoacyl-tRNA synthetase family.

It is found in the cytoplasm. It catalyses the reaction tRNA(Leu) + L-leucine + ATP = L-leucyl-tRNA(Leu) + AMP + diphosphate. This is Leucine--tRNA ligase from Brevibacillus brevis (strain 47 / JCM 6285 / NBRC 100599).